We begin with the raw amino-acid sequence, 306 residues long: MNIKIGTINFMGIRNVAFAVTLILTVIALGSWFTKGINFGLDFTGGTLIELTYEQPADLGKVRGQLVGAGYEDAVVQSFGDARDVLVRMPSEDPELGKKVATALQQADAGNPANLKRVEYVGPQVGEELRDQGGLGMLLALGGILLYVGFRFQWKFALGAILSLVHDAIIVMGVLSFFQVTFDLTVLAAVLAVVGYSLNDTIVIFDRVRENFRVLRKADLVENLNISTSQTLLRTIATSVSTLLAIAALLFFGGDNLFGFSIALFVGVMAGTYSSIYIANVVLIWLNLTSEDLIPPQAKDTVDDRP.

The next 6 membrane-spanning stretches (helical) occupy residues alanine 17–isoleucine 37, glycine 134–tryptophan 154, leucine 158–phenylalanine 178, threonine 185–phenylalanine 205, leucine 232–glycine 254, and valine 268–leucine 288.

This sequence belongs to the SecD/SecF family. SecF subfamily. In terms of assembly, forms a complex with SecD. Part of the essential Sec protein translocation apparatus which comprises SecA, SecYEG and auxiliary proteins SecDF-YajC and YidC.

Its subcellular location is the cell inner membrane. Part of the Sec protein translocase complex. Interacts with the SecYEG preprotein conducting channel. SecDF uses the proton motive force (PMF) to complete protein translocation after the ATP-dependent function of SecA. The sequence is that of Protein translocase subunit SecF from Pseudomonas aeruginosa (strain ATCC 15692 / DSM 22644 / CIP 104116 / JCM 14847 / LMG 12228 / 1C / PRS 101 / PAO1).